The chain runs to 633 residues: Kelch-like protein diablo (633 aa).

A disordered region spans residues 1–62 (MGDLPGSTGG…ARLSHTSEKH (62 aa)). Positions 7-25 (STGGGGGVGGGGNGGGGPT) are enriched in gly residues. The span at 26–45 (IAGTNGNSTTGPGSSTGSTG) shows a compositional bias: low complexity. Residues 80–147 (CDVVLNVGGR…CYTAHIIVEE (68 aa)) enclose the BTB domain. Residues 182–284 (CLGIRAFADT…SPKFLVGTVG (103 aa)) enclose the BACK domain. Kelch repeat units lie at residues 331-377 (VLFA…VLND), 379-425 (LYAV…VLDG), 426-472 (FLYA…VLGG), 474-519 (LYAI…VFNN), 521-566 (IYAV…VVNG), and 567-613 (QLYA…VMRA).

It participates in protein modification; protein ubiquitination. Functionally, probable substrate-specific adapter of an E3 ubiquitin-protein ligase complex which mediates the ubiquitination and subsequent proteasomal degradation of target proteins. May have a role in synapse differentiation and growth. The chain is Kelch-like protein diablo from Drosophila ananassae (Fruit fly).